A 116-amino-acid polypeptide reads, in one-letter code: Somatostatin (116 aa).

The first 24 residues, 1–24 (MLSCRLQCALALLSIALAVGTVSA), serve as a signal peptide directing secretion. Residues 25–88 (APSDPRLRQF…QDEVRLELER (64 aa)) constitute a propeptide that is removed on maturation. The disordered stretch occupies residues 60–82 (PSQTENEALESEDLSRGAEQDEV). Residues 72-82 (DLSRGAEQDEV) show a composition bias toward basic and acidic residues. Cys105 and Cys116 are disulfide-bonded.

It belongs to the somatostatin family.

The protein localises to the secreted. Its function is as follows. Somatostatin inhibits the release of somatotropin. This is Somatostatin (SST) from Gallus gallus (Chicken).